A 455-amino-acid polypeptide reads, in one-letter code: Chromosomal replication initiator protein DnaA (455 aa).

The segment at 1-75 (MDTNNNIEKE…EILSQNKVGM (75 aa)) is domain I, interacts with DnaA modulators. The interval 75 to 106 (MHLAHSVDVRIEVAPKIQINAQANINYKAIKT) is domain II. The segment at 107–321 (SVKDSYTFEN…GAIIKISVNA (215 aa)) is domain III, AAA+ region. Positions 151, 153, 154, and 155 each coordinate ATP. The segment at 322-455 (NLMNAPIDLN…DKKTAFNSSE (134 aa)) is domain IV, binds dsDNA.

This sequence belongs to the DnaA family. Oligomerizes as a right-handed, spiral filament on DNA at oriC.

It is found in the cytoplasm. In terms of biological role, plays an essential role in the initiation and regulation of chromosomal replication. ATP-DnaA binds to the origin of replication (oriC) to initiate formation of the DNA replication initiation complex once per cell cycle. Binds the DnaA box (a 9 base pair repeat at the origin) and separates the double-stranded (ds)DNA. Forms a right-handed helical filament on oriC DNA; dsDNA binds to the exterior of the filament while single-stranded (ss)DNA is stabiized in the filament's interior. The ATP-DnaA-oriC complex binds and stabilizes one strand of the AT-rich DNA unwinding element (DUE), permitting loading of DNA polymerase. After initiation quickly degrades to an ADP-DnaA complex that is not apt for DNA replication. Binds acidic phospholipids. The protein is Chromosomal replication initiator protein DnaA of Helicobacter pylori (strain G27).